A 138-amino-acid chain; its full sequence is ATP synthase epsilon chain (138 aa).

Belongs to the ATPase epsilon chain family. As to quaternary structure, F-type ATPases have 2 components, CF(1) - the catalytic core - and CF(0) - the membrane proton channel. CF(1) has five subunits: alpha(3), beta(3), gamma(1), delta(1), epsilon(1). CF(0) has three main subunits: a, b and c.

The protein resides in the cell inner membrane. Functionally, produces ATP from ADP in the presence of a proton gradient across the membrane. The protein is ATP synthase epsilon chain of Polaromonas naphthalenivorans (strain CJ2).